The primary structure comprises 96 residues: Putative septation protein SpoVG (96 aa).

The protein belongs to the SpoVG family.

In terms of biological role, could be involved in septation. This Oceanobacillus iheyensis (strain DSM 14371 / CIP 107618 / JCM 11309 / KCTC 3954 / HTE831) protein is Putative septation protein SpoVG.